Consider the following 273-residue polypeptide: Dermonecrotic toxin LruSicTox-alphaIC1d (273 aa).

Residue His5 is part of the active site. Mg(2+) is bound by residues Glu25 and Asp27. Catalysis depends on His41, which acts as the Nucleophile. 2 disulfide bridges follow: Cys45-Cys51 and Cys47-Cys190. A Mg(2+)-binding site is contributed by Asp85.

The protein belongs to the arthropod phospholipase D family. Class II subfamily. Mg(2+) serves as cofactor. Expressed by the venom gland.

It is found in the secreted. The enzyme catalyses an N-(acyl)-sphingosylphosphocholine = an N-(acyl)-sphingosyl-1,3-cyclic phosphate + choline. It carries out the reaction an N-(acyl)-sphingosylphosphoethanolamine = an N-(acyl)-sphingosyl-1,3-cyclic phosphate + ethanolamine. The catalysed reaction is a 1-acyl-sn-glycero-3-phosphocholine = a 1-acyl-sn-glycero-2,3-cyclic phosphate + choline. It catalyses the reaction a 1-acyl-sn-glycero-3-phosphoethanolamine = a 1-acyl-sn-glycero-2,3-cyclic phosphate + ethanolamine. Functionally, dermonecrotic toxins cleave the phosphodiester linkage between the phosphate and headgroup of certain phospholipids (sphingolipid and lysolipid substrates), forming an alcohol (often choline) and a cyclic phosphate. This toxin acts on sphingomyelin (SM). It may also act on ceramide phosphoethanolamine (CPE), lysophosphatidylcholine (LPC) and lysophosphatidylethanolamine (LPE), but not on lysophosphatidylserine (LPS), and lysophosphatidylglycerol (LPG). It acts by transphosphatidylation, releasing exclusively cyclic phosphate products as second products. Induces dermonecrosis, hemolysis, increased vascular permeability, edema, inflammatory response, and platelet aggregation. The protein is Dermonecrotic toxin LruSicTox-alphaIC1d of Loxosceles rufescens (Mediterranean recluse spider).